Here is a 259-residue protein sequence, read N- to C-terminus: Deoxyribose-phosphate aldolase (259 aa).

Asp102 acts as the Proton donor/acceptor in catalysis. Lys167 acts as the Schiff-base intermediate with acetaldehyde in catalysis. Lys201 acts as the Proton donor/acceptor in catalysis.

It belongs to the DeoC/FbaB aldolase family. DeoC type 2 subfamily.

The protein resides in the cytoplasm. It carries out the reaction 2-deoxy-D-ribose 5-phosphate = D-glyceraldehyde 3-phosphate + acetaldehyde. It participates in carbohydrate degradation; 2-deoxy-D-ribose 1-phosphate degradation; D-glyceraldehyde 3-phosphate and acetaldehyde from 2-deoxy-alpha-D-ribose 1-phosphate: step 2/2. In terms of biological role, catalyzes a reversible aldol reaction between acetaldehyde and D-glyceraldehyde 3-phosphate to generate 2-deoxy-D-ribose 5-phosphate. This is Deoxyribose-phosphate aldolase from Edwardsiella ictaluri (strain 93-146).